A 688-amino-acid polypeptide reads, in one-letter code: Glycine--tRNA ligase beta subunit (688 aa).

It belongs to the class-II aminoacyl-tRNA synthetase family. As to quaternary structure, tetramer of two alpha and two beta subunits.

It localises to the cytoplasm. The catalysed reaction is tRNA(Gly) + glycine + ATP = glycyl-tRNA(Gly) + AMP + diphosphate. The polypeptide is Glycine--tRNA ligase beta subunit (Aliivibrio fischeri (strain MJ11) (Vibrio fischeri)).